We begin with the raw amino-acid sequence, 204 residues long: Pre-mRNA leakage protein 1 (204 aa).

Residues tyrosine 104–isoleucine 172 enclose the FHA domain.

As to quaternary structure, belongs to the pre-mRNA retention and splicing (RES) complex composed of at least BUD13, IST3 and PML1.

Its subcellular location is the cytoplasm. It localises to the nucleus. Functionally, required for efficient splicing and pre-mRNA nuclear retention. This Saccharomyces cerevisiae (strain ATCC 204508 / S288c) (Baker's yeast) protein is Pre-mRNA leakage protein 1 (PML1).